Consider the following 238-residue polypeptide: ATP-dependent dethiobiotin synthetase BioD (238 aa).

12-17 is an ATP binding site; sequence EVGKTV. Thr16 is a Mg(2+) binding site. The active site involves Lys37. Thr41 contacts substrate. Residues Asp50, 109 to 112, 170 to 171, and 200 to 202 each bind ATP; these read EGAG, GS, and PAG. Residues Asp50 and Glu109 each coordinate Mg(2+).

This sequence belongs to the dethiobiotin synthetase family. In terms of assembly, homodimer. Mg(2+) serves as cofactor.

The protein resides in the cytoplasm. The catalysed reaction is (7R,8S)-7,8-diammoniononanoate + CO2 + ATP = (4R,5S)-dethiobiotin + ADP + phosphate + 3 H(+). The protein operates within cofactor biosynthesis; biotin biosynthesis; biotin from 7,8-diaminononanoate: step 1/2. Catalyzes a mechanistically unusual reaction, the ATP-dependent insertion of CO2 between the N7 and N8 nitrogen atoms of 7,8-diaminopelargonic acid (DAPA, also called 7,8-diammoniononanoate) to form a ureido ring. In Parafrankia sp. (strain EAN1pec), this protein is ATP-dependent dethiobiotin synthetase BioD.